Consider the following 777-residue polypeptide: Beta-hexosaminidase (777 aa).

An N-terminal signal peptide occupies residues methionine 1–alanine 18. Cysteine 19 carries N-palmitoyl cysteine lipidation. Cysteine 19 carries the S-diacylglycerol cysteine lipid modification. In terms of domain architecture, PA14 spans alanine 625–lysine 766.

This sequence belongs to the glycosyl hydrolase 20 family.

The protein localises to the cell outer membrane. The catalysed reaction is Hydrolysis of terminal non-reducing N-acetyl-D-hexosamine residues in N-acetyl-beta-D-hexosaminides.. In Porphyromonas gingivalis (strain ATCC BAA-308 / W83), this protein is Beta-hexosaminidase (nahA).